The sequence spans 122 residues: Large ribosomal subunit protein uL29B (122 aa).

A coiled-coil region spans residues 10-69 (QLGIKQIEERAAEIKAELAALRQKKNSGDVGANDIKTAKKNLARALTVRREKILEELVEA).

Belongs to the universal ribosomal protein uL29 family. As to quaternary structure, component of the large ribosomal subunit.

The protein resides in the cytoplasm. The polypeptide is Large ribosomal subunit protein uL29B (RPL35C) (Encephalitozoon cuniculi (strain GB-M1) (Microsporidian parasite)).